The sequence spans 490 residues: MVPVVALVGRPNVGKSTLFNRLTRTRDALVADFPGLTRDRKYGRAEIEGREFICIDTGGIDGTEDGVETRMAEQSLLAIEEADVVLFMVDARAGLMPADEAIAKHLRSREKPTFLVANKIDGLDPDQAVVDFYSLGLGEIYPIAASHGRGVLSLLEHVLLPWMEDLAPQEEVDEDAEYWAQFEAEENGEEEEEDDFDPQSLPIKLAIVGRPNVGKSTLTNRILGEERVVVYDMPGTTRDSIYIPMERDGREYVLIDTAGVRKRGKITDAVEKFSVIKTLQAIEDANVVMLVIDAREGISDQDLSLLGFILNSGRSLVIVVNKWDGLSQEVKEQVKETLDFRLGFIDFARVHFISALHGSGVGNLFESVREAYDSSTRRVGTSMLTRIMTMAVEDHQPPLVRGRRVKLKYAHAGGYNPPIVVIHGNQVKDLPDSYKRYLMNYFRKSLDVMGSPIRIQFKEGENPYANKRNTLTPTQMRKRKRLMKHIKKNK.

2 consecutive EngA-type G domains span residues 3-166 (PVVA…MEDL) and 203-376 (IKLA…DSST). GTP-binding positions include 9-16 (GRPNVGKS), 56-60 (DTGGI), 118-121 (NKID), 209-216 (GRPNVGKS), 256-260 (DTAGV), and 321-324 (NKWD). The KH-like domain maps to 377–461 (RRVGTSMLTR…PIRIQFKEGE (85 aa)).

The protein belongs to the TRAFAC class TrmE-Era-EngA-EngB-Septin-like GTPase superfamily. EngA (Der) GTPase family. As to quaternary structure, associates with the 50S ribosomal subunit.

GTPase that plays an essential role in the late steps of ribosome biogenesis. This chain is GTPase Der, found in Shigella boydii serotype 18 (strain CDC 3083-94 / BS512).